A 916-amino-acid chain; its full sequence is Oxoglutarate dehydrogenase (916 aa).

This sequence belongs to the alpha-ketoglutarate dehydrogenase family. In terms of assembly, homodimer. Part of the 2-oxoglutarate dehydrogenase (OGDH) complex composed of E1 (2-oxoglutarate dehydrogenase), E2 (dihydrolipoamide succinyltransferase) and E3 (dihydrolipoamide dehydrogenase); the complex contains multiple copies of the three enzymatic components (E1, E2 and E3). Thiamine diphosphate is required as a cofactor.

It catalyses the reaction N(6)-[(R)-lipoyl]-L-lysyl-[protein] + 2-oxoglutarate + H(+) = N(6)-[(R)-S(8)-succinyldihydrolipoyl]-L-lysyl-[protein] + CO2. E1 component of the 2-oxoglutarate dehydrogenase (OGDH) complex which catalyzes the decarboxylation of 2-oxoglutarate, the first step in the conversion of 2-oxoglutarate to succinyl-CoA and CO(2). The polypeptide is Oxoglutarate dehydrogenase (sucA) (Buchnera aphidicola subsp. Baizongia pistaciae (strain Bp)).